Here is a 103-residue protein sequence, read N- to C-terminus: MKNKRVLTNVILLLLVVFITIIPFFVAKNGEFGGSDDQAEEAITQIDENYEPWFSPLFEPASGEIESLLFALQAAIGAGVIGFGLGYLKGKKKVNDEVNDKHR.

The next 2 membrane-spanning stretches (helical) occupy residues 6–26 and 68–88; these read VLTN…PFFV and LLFA…LGYL.

It belongs to the CbiN family. In terms of assembly, forms an energy-coupling factor (ECF) transporter complex composed of an ATP-binding protein (A component, CbiO), a transmembrane protein (T component, CbiQ) and 2 possible substrate-capture proteins (S components, CbiM and CbiN) of unknown stoichimetry.

The protein resides in the cell membrane. Its pathway is cofactor biosynthesis; adenosylcobalamin biosynthesis. Its function is as follows. Part of the energy-coupling factor (ECF) transporter complex CbiMNOQ involved in cobalt import. The polypeptide is Cobalt transport protein CbiN (Clostridium perfringens (strain 13 / Type A)).